The chain runs to 274 residues: tRNA-cytidine(32) 2-sulfurtransferase (274 aa).

The PP-loop motif motif lies at 40 to 45 (SGGKDS). [4Fe-4S] cluster contacts are provided by cysteine 115, cysteine 118, and cysteine 206.

It belongs to the TtcA family. In terms of assembly, homodimer. The cofactor is Mg(2+). [4Fe-4S] cluster serves as cofactor.

The protein localises to the cytoplasm. It catalyses the reaction cytidine(32) in tRNA + S-sulfanyl-L-cysteinyl-[cysteine desulfurase] + AH2 + ATP = 2-thiocytidine(32) in tRNA + L-cysteinyl-[cysteine desulfurase] + A + AMP + diphosphate + H(+). The protein operates within tRNA modification. Functionally, catalyzes the ATP-dependent 2-thiolation of cytidine in position 32 of tRNA, to form 2-thiocytidine (s(2)C32). The sulfur atoms are provided by the cysteine/cysteine desulfurase (IscS) system. The protein is tRNA-cytidine(32) 2-sulfurtransferase of Pseudomonas paraeruginosa (strain DSM 24068 / PA7) (Pseudomonas aeruginosa (strain PA7)).